Reading from the N-terminus, the 138-residue chain is Large ribosomal subunit protein uL16 (138 aa).

This sequence belongs to the universal ribosomal protein uL16 family. Part of the 50S ribosomal subunit.

In terms of biological role, binds 23S rRNA and is also seen to make contacts with the A and possibly P site tRNAs. The protein is Large ribosomal subunit protein uL16 of Chlamydia trachomatis serovar D (strain ATCC VR-885 / DSM 19411 / UW-3/Cx).